Reading from the N-terminus, the 153-residue chain is Ribonuclease H (153 aa).

An RNase H type-1 domain is found at 1 to 141 (MKKIQLFTDG…CDDLARRAAE (141 aa)). Mg(2+) contacts are provided by Asp-9, Glu-47, Asp-69, and Asp-133.

It belongs to the RNase H family. In terms of assembly, monomer. It depends on Mg(2+) as a cofactor.

The protein resides in the cytoplasm. The enzyme catalyses Endonucleolytic cleavage to 5'-phosphomonoester.. Endonuclease that specifically degrades the RNA of RNA-DNA hybrids. This chain is Ribonuclease H, found in Psychromonas ingrahamii (strain DSM 17664 / CCUG 51855 / 37).